We begin with the raw amino-acid sequence, 220 residues long: Charged multivesicular body protein 2a (220 aa).

Methionine 1 carries the N-acetylmethionine modification. 2 coiled-coil regions span residues 12-52 (EELL…KMAK) and 195-220 (RAAE…LRRD). The MIT-interacting motif motif lies at 208–218 (ADLEERLKNLR).

It belongs to the SNF7 family. As to quaternary structure, probable core component of the endosomal sorting required for transport complex III (ESCRT-III). ESCRT-III components are thought to multimerize to form a flat lattice on the perimeter membrane of the endosome.

It localises to the late endosome membrane. It is found in the cytoplasm. In terms of biological role, probable core component of the endosomal sorting required for transport complex III (ESCRT-III) which is involved in multivesicular bodies (MVBs) formation and sorting of endosomal cargo proteins into MVBs. MVBs contain intraluminal vesicles (ILVs) that are generated by invagination and scission from the limiting membrane of the endosome and mostly are delivered to lysosomes enabling degradation of membrane proteins, such as stimulated growth factor receptors, lysosomal enzymes and lipids. The protein is Charged multivesicular body protein 2a (CHMP2A) of Gallus gallus (Chicken).